Reading from the N-terminus, the 550-residue chain is Chaperonin GroEL (550 aa).

Residues Thr-29 to Pro-32, Lys-50, Asp-86 to Thr-90, Gly-418, and Asp-499 contribute to the ATP site.

The protein belongs to the chaperonin (HSP60) family. Forms a cylinder of 14 subunits composed of two heptameric rings stacked back-to-back. Interacts with the co-chaperonin GroES.

It is found in the cytoplasm. The enzyme catalyses ATP + H2O + a folded polypeptide = ADP + phosphate + an unfolded polypeptide.. Its function is as follows. Together with its co-chaperonin GroES, plays an essential role in assisting protein folding. The GroEL-GroES system forms a nano-cage that allows encapsulation of the non-native substrate proteins and provides a physical environment optimized to promote and accelerate protein folding. This is Chaperonin GroEL from Wolbachia sp. subsp. Brugia malayi (strain TRS).